A 414-amino-acid chain; its full sequence is 2,3-bisphosphoglycerate-independent phosphoglycerate mutase (414 aa).

This sequence belongs to the BPG-independent phosphoglycerate mutase family. A-PGAM subfamily.

The enzyme catalyses (2R)-2-phosphoglycerate = (2R)-3-phosphoglycerate. The protein operates within carbohydrate degradation; glycolysis; pyruvate from D-glyceraldehyde 3-phosphate: step 3/5. Functionally, catalyzes the interconversion of 2-phosphoglycerate and 3-phosphoglycerate. The polypeptide is 2,3-bisphosphoglycerate-independent phosphoglycerate mutase (Saccharolobus islandicus (strain M.14.25 / Kamchatka #1) (Sulfolobus islandicus)).